The sequence spans 444 residues: Lycopaoctaene synthase (444 aa).

NADP(+)-binding residues include Arg-48 and Arg-73. Positions 76, 79, and 80 each coordinate Mg(2+). Positions 215, 315, and 317 each coordinate NADP(+). The next 2 membrane-spanning stretches (helical) occupy residues 391 to 411 (TAMV…AYVY) and 415 to 435 (GTSL…IGLF).

The protein belongs to the phytoene/squalene synthase family. Requires Mg(2+) as cofactor.

Its subcellular location is the membrane. It carries out the reaction 2 (2E,6E)-farnesyl diphosphate + NADH + H(+) = squalene + 2 diphosphate + NAD(+). The enzyme catalyses 2 (2E,6E)-farnesyl diphosphate + NADPH + H(+) = squalene + 2 diphosphate + NADP(+). The catalysed reaction is 2 (2E,6E,10E)-geranylgeranyl diphosphate + NADPH + H(+) = all-trans-lycopaoctaene + 2 diphosphate + NADP(+). Functionally, converts the C20 geranylgeranyl diphosphate (GGPP) to the C40 lycopaoctaene, the first committed intermediate in the production of lycopadiene. Converts farnesyl diphosphate (FPP) into squalene, a precursor for sterol biosynthesis in eukaryotes. Converts with low efficiency the C20 phytyl diphosphate (PPP) to the C40 lycopadiene in vitro. This reaction may not have biological significance in vivo. In Botryococcus braunii (Green alga), this protein is Lycopaoctaene synthase.